Here is a 259-residue protein sequence, read N- to C-terminus: Thiazole synthase (259 aa).

Lys-95 (schiff-base intermediate with DXP) is an active-site residue. 1-deoxy-D-xylulose 5-phosphate-binding positions include Gly-156, 182–183, and 204–205; these read AG and NT.

It belongs to the ThiG family. As to quaternary structure, homotetramer. Forms heterodimers with either ThiH or ThiS.

The protein resides in the cytoplasm. It carries out the reaction [ThiS sulfur-carrier protein]-C-terminal-Gly-aminoethanethioate + 2-iminoacetate + 1-deoxy-D-xylulose 5-phosphate = [ThiS sulfur-carrier protein]-C-terminal Gly-Gly + 2-[(2R,5Z)-2-carboxy-4-methylthiazol-5(2H)-ylidene]ethyl phosphate + 2 H2O + H(+). Its pathway is cofactor biosynthesis; thiamine diphosphate biosynthesis. Its function is as follows. Catalyzes the rearrangement of 1-deoxy-D-xylulose 5-phosphate (DXP) to produce the thiazole phosphate moiety of thiamine. Sulfur is provided by the thiocarboxylate moiety of the carrier protein ThiS. In vitro, sulfur can be provided by H(2)S. The protein is Thiazole synthase of Baumannia cicadellinicola subsp. Homalodisca coagulata.